A 299-amino-acid chain; its full sequence is MPT51/MPB51 antigen (299 aa).

Residues 1–26 (MKGRSALLRALWIAALSFGLGGVAVA) form the signal peptide.

The protein belongs to the mycobacterial A85 antigen family. In terms of assembly, homodimer.

Its subcellular location is the secreted. Functionally, may have a role in host tissue attachment, whereby ligands may include the serum protein fibronectin and small sugars. This chain is MPT51/MPB51 antigen (mpt51), found in Mycobacterium bovis (strain ATCC BAA-935 / AF2122/97).